The chain runs to 82 residues: uncharacterized protein (82 aa).

3 helical membrane passes run 1 to 21 (MSAS…SVST), 22 to 42 (VLLG…LAAF), and 62 to 82 (WRLL…LTLL).

It localises to the cell membrane. This is an uncharacterized protein from Stutzerimonas stutzeri (Pseudomonas stutzeri).